A 337-amino-acid polypeptide reads, in one-letter code: MASSSGSKAEFIVGGKYKLVRKIGSGSFGDIYLAINITNGEEVAVKLESQKARHPQLLYESKLYKILQGGVGIPHIRWYGQEKDYNVLVMDLLGPSLEDLFNFCSRRFTMKTVLMLADQMISRIEYVHTKNFIHRDIKPDNFLMGIGRHCNKLFLIDFGLAKKYRDNRTRQHIPYREDKNLTGTARYASINAHLGIEQSRRDDMESLGYVLMYFNRTSLPWQGLKAATKKQKYEKISEKKMSTPVEVLCKGFPAEFAMYLNYCRGLRFEEAPDYMYLRQLFRILFRTLNHQYDYTFDWTMLKQKAAQQAASSSGQGQQAQTPTGKQTDKSKSNMKGF.

One can recognise a Protein kinase domain in the interval 17-285 (YKLVRKIGSG…YLRQLFRILF (269 aa)). ATP is bound by residues 23–31 (IGSGSFGDI) and Lys46. Asp136 acts as the Proton acceptor in catalysis. Residues 309-325 (AASSSGQGQQAQTPTGK) are compositionally biased toward low complexity. The interval 309–337 (AASSSGQGQQAQTPTGKQTDKSKSNMKGF) is disordered.

Belongs to the protein kinase superfamily. CK1 Ser/Thr protein kinase family. Casein kinase I subfamily. Autophosphorylated.

It is found in the cytoplasm. It localises to the cytoskeleton. The protein localises to the microtubule organizing center. The protein resides in the centrosome. Its subcellular location is the chromosome. It is found in the centromere. It localises to the kinetochore. The protein localises to the nucleus speckle. The protein resides in the cilium basal body. Its subcellular location is the spindle. The enzyme catalyses L-seryl-[protein] + ATP = O-phospho-L-seryl-[protein] + ADP + H(+). It catalyses the reaction L-threonyl-[protein] + ATP = O-phospho-L-threonyl-[protein] + ADP + H(+). Its function is as follows. Casein kinases are operationally defined by their preferential utilization of acidic proteins such as caseins as substrates. It can phosphorylate a large number of proteins. Participates in Wnt signaling. May play a role in segregating chromosomes during mitosis. May play a role in keratin cytoskeleton disassembly. In Gallus gallus (Chicken), this protein is Casein kinase I isoform alpha (CSNK1A1).